The primary structure comprises 714 residues: Cadherin-13 (714 aa).

Residues 1–22 (MQPRTPLTLCVLLSQVLLVTSA) form the signal peptide. The propeptide occupies 23–138 (DDLECTPGFQ…RTSPVPRQKR (116 aa)). Cadherin domains follow at residues 143-245 (SPIL…RPIF), 246-363 (REGP…SPKF), 364-477 (TKKE…GPVF), 478-585 (YPDP…APVI), and 586-680 (YPTV…VQVC). Residues 156–183 (PRDVGKVVDSDRPEGSKFRLTGKGVDQD) form a disordered region. Positions 158–172 (DVGKVVDSDRPEGSK) are enriched in basic and acidic residues. N-linked (GlcNAc...) asparagine glycosylation is found at asparagine 382, asparagine 489, asparagine 500, asparagine 530, asparagine 598, asparagine 638, and asparagine 671. Glycine 693 carries GPI-anchor amidated glycine lipidation. A propeptide spans 694 to 714 (ALHLSLSLLLLFSLLSLLSGL) (removed in mature form).

As to quaternary structure, by contrast to classical cadherins, homodimerization in trans is not mediated by cadherin EC1 domain strand-swapping, but instead through a homophilic adhesive interface which joins two elongated EC1-EC2 domains through a region near their Ca2+-binding sites to form a tetrahedral, X-like shape.

The protein localises to the cell membrane. The protein resides in the cytoplasm. In terms of biological role, cadherins are calcium-dependent cell adhesion proteins. They preferentially interact with themselves in a homophilic manner in connecting cells; cadherins may thus contribute to the sorting of heterogeneous cell types. May act as a negative regulator of neural cell growth. This is Cadherin-13 (Cdh13) from Mus musculus (Mouse).